Consider the following 465-residue polypeptide: UDP-N-acetylmuramate--L-alanine ligase (465 aa).

125-131 serves as a coordination point for ATP; the sequence is GTHGKTT.

This sequence belongs to the MurCDEF family.

The protein localises to the cytoplasm. The catalysed reaction is UDP-N-acetyl-alpha-D-muramate + L-alanine + ATP = UDP-N-acetyl-alpha-D-muramoyl-L-alanine + ADP + phosphate + H(+). It participates in cell wall biogenesis; peptidoglycan biosynthesis. Cell wall formation. This Deinococcus geothermalis (strain DSM 11300 / CIP 105573 / AG-3a) protein is UDP-N-acetylmuramate--L-alanine ligase.